The primary structure comprises 888 residues: Bifunctional uridylyltransferase/uridylyl-removing enzyme (888 aa).

Residues Met-1 to Pro-348 are uridylyltransferase. The segment at Ile-349–Thr-709 is uridylyl-removing. The region spanning Val-468 to Leu-590 is the HD domain. ACT domains are found at residues Glu-710–Met-787 and Glu-817–Gln-888.

It belongs to the GlnD family. The cofactor is Mg(2+).

The enzyme catalyses [protein-PII]-L-tyrosine + UTP = [protein-PII]-uridylyl-L-tyrosine + diphosphate. It carries out the reaction [protein-PII]-uridylyl-L-tyrosine + H2O = [protein-PII]-L-tyrosine + UMP + H(+). Its activity is regulated as follows. Uridylyltransferase (UTase) activity is inhibited by glutamine, while glutamine activates uridylyl-removing (UR) activity. Functionally, modifies, by uridylylation and deuridylylation, the PII regulatory proteins (GlnB and homologs), in response to the nitrogen status of the cell that GlnD senses through the glutamine level. Under low glutamine levels, catalyzes the conversion of the PII proteins and UTP to PII-UMP and PPi, while under higher glutamine levels, GlnD hydrolyzes PII-UMP to PII and UMP (deuridylylation). Thus, controls uridylylation state and activity of the PII proteins, and plays an important role in the regulation of nitrogen assimilation and metabolism. This Hydrogenovibrio crunogenus (strain DSM 25203 / XCL-2) (Thiomicrospira crunogena) protein is Bifunctional uridylyltransferase/uridylyl-removing enzyme.